Here is a 193-residue protein sequence, read N- to C-terminus: MKLLIINNHDSFTFNLVDLIRKLNVPYDVLNVEDLKENTAENYSHILISPGPDIPRAYPQLFSMLEKYYQQKSILGVCLGHQTLCEFFGGTLYNLENVRHGQKRTLKVRSNSPLFFDLPTEFNIGLYHSWGVQEEDFPDCLEITALCDEDVVMAMQHKSLPIYSVQFHPESYMSDFGEKILRNWLAIPPTTNP.

The Glutamine amidotransferase type-1 domain occupies lysine 2 to proline 193. Residues cysteine 78, histidine 168, and glutamate 170 contribute to the active site.

In terms of assembly, tetramer of two components I and two components II.

It catalyses the reaction chorismate + L-glutamine = anthranilate + pyruvate + L-glutamate + H(+). It participates in amino-acid biosynthesis; L-tryptophan biosynthesis; L-tryptophan from chorismate: step 1/5. This chain is Putative anthranilate synthase component II, found in Haemophilus influenzae (strain ATCC 51907 / DSM 11121 / KW20 / Rd).